A 331-amino-acid polypeptide reads, in one-letter code: Laforin (331 aa).

Positions 1–124 (MLFRFGVVVP…NNLVDGVYCL (124 aa)) constitute a CBM20 domain. Residue serine 25 is modified to Phosphoserine; by AMPK. Residues tryptophan 32, lysine 87, 103-107 (GPHHD), aspartate 197, aspartate 235, and arginine 241 contribute to the substrate site. Residues 156 to 323 (HYSRILPNIW…QQDFFQKFGK (168 aa)) form the Tyrosine-protein phosphatase domain. The Phosphocysteine intermediate role is filled by cysteine 266. Positions 266–272 (CNAGVGR) match the Glucan phosphatase signature motif CXAGXGR motif. Residues 267 to 272 (NAGVGR) and tyrosine 304 contribute to the substrate site.

The protein belongs to the protein-tyrosine phosphatase family. Homodimer. Interacts with itself. Interacts with PPP1R3B, PPP1R3C, PPP1R3D, HIRIP5, and EPM2AIP1. Binds glycogen and Lafora bodies. Interacts with NHLRC1/malin (via the NHL repeats). Forms a complex with NHLRC1/malin and HSP70. Interacts with PPP1R3D; in the presence of NHLC1/malin the interaction leads to ubiquitination and autophagic degradation of PPP1R3D. Interacts (via the phosphatase domain) with MAPT/Tau; the interaction dephosphorylates MAPT. Interacts with PRDM8. In terms of processing, polyubiquitinated by NHLRC1/malin. Post-translationally, phosphorylation on Ser-25 by AMPK affects the phosphatase activity of the enzyme and its ability to homodimerize and interact with NHLRC1, PPP1R3C or PRKAA2. As to expression, widely expressed.

It localises to the cytoplasm. The protein localises to the endoplasmic reticulum membrane. It is found in the cell membrane. The enzyme catalyses O-phospho-L-tyrosyl-[protein] + H2O = L-tyrosyl-[protein] + phosphate. It catalyses the reaction O-phospho-L-seryl-[protein] + H2O = L-seryl-[protein] + phosphate. It carries out the reaction O-phospho-L-threonyl-[protein] + H2O = L-threonyl-[protein] + phosphate. Its function is as follows. Plays an important role in preventing glycogen hyperphosphorylation and the formation of insoluble aggregates, via its activity as glycogen phosphatase, and by promoting the ubiquitination of proteins involved in glycogen metabolism via its interaction with the E3 ubiquitin ligase NHLRC1/malin. Dephosphorylates phosphotyrosine and synthetic substrates, such as para-nitrophenylphosphate (pNPP), and has low activity with phosphoserine and phosphothreonine substrates (in vitro). Has also been shown to dephosphorylate MAPT. Shows strong phosphatase activity towards complex carbohydrates in vitro, avoiding glycogen hyperphosphorylation which is associated with reduced branching and formation of insoluble aggregates. Forms a complex with NHLRC1/malin and HSP70, which suppresses the cellular toxicity of misfolded proteins by promoting their degradation through the ubiquitin-proteasome system (UPS). Acts as a scaffold protein to facilitate PPP1R3C/PTG ubiquitination by NHLRC1/malin. Also promotes proteasome-independent protein degradation through the macroautophagy pathway. The chain is Laforin (Epm2a) from Rattus norvegicus (Rat).